Consider the following 330-residue polypeptide: Phosphate acyltransferase (330 aa).

Belongs to the PlsX family. Homodimer. Probably interacts with PlsY.

The protein resides in the cytoplasm. The catalysed reaction is a fatty acyl-[ACP] + phosphate = an acyl phosphate + holo-[ACP]. Its pathway is lipid metabolism; phospholipid metabolism. Functionally, catalyzes the reversible formation of acyl-phosphate (acyl-PO(4)) from acyl-[acyl-carrier-protein] (acyl-ACP). This enzyme utilizes acyl-ACP as fatty acyl donor, but not acyl-CoA. This chain is Phosphate acyltransferase, found in Bacillus cereus (strain AH820).